A 353-amino-acid chain; its full sequence is UDP-3-O-acylglucosamine N-acyltransferase (353 aa).

The active-site Proton acceptor is histidine 258.

The protein belongs to the transferase hexapeptide repeat family. LpxD subfamily. As to quaternary structure, homotrimer.

The enzyme catalyses a UDP-3-O-[(3R)-3-hydroxyacyl]-alpha-D-glucosamine + a (3R)-hydroxyacyl-[ACP] = a UDP-2-N,3-O-bis[(3R)-3-hydroxyacyl]-alpha-D-glucosamine + holo-[ACP] + H(+). It functions in the pathway bacterial outer membrane biogenesis; LPS lipid A biosynthesis. Functionally, catalyzes the N-acylation of UDP-3-O-acylglucosamine using 3-hydroxyacyl-ACP as the acyl donor. Is involved in the biosynthesis of lipid A, a phosphorylated glycolipid that anchors the lipopolysaccharide to the outer membrane of the cell. This is UDP-3-O-acylglucosamine N-acyltransferase from Parvibaculum lavamentivorans (strain DS-1 / DSM 13023 / NCIMB 13966).